The following is a 352-amino-acid chain: Histidine protein kinase SaeS (352 aa).

The next 2 helical transmembrane spans lie at 9-29 and 41-61; these read QIII…VIAY and TLAI…SIFI. The Histidine kinase domain maps to 130–349; the sequence is NLAHDLKTPL…TMTLTLKKFQ (220 aa). Histidine 133 carries the phosphohistidine; by autocatalysis modification.

In terms of processing, autophosphorylated.

It localises to the cell membrane. It carries out the reaction ATP + protein L-histidine = ADP + protein N-phospho-L-histidine.. Its function is as follows. Member of the two-component regulatory system SaeR/SaeS. Probably functions as a membrane-associated protein kinase that upon sensing the appropriate signal, autophosphorylates and in turn activates the cytosolic response regulator SaeR. This chain is Histidine protein kinase SaeS (saeS), found in Staphylococcus epidermidis (strain ATCC 35984 / DSM 28319 / BCRC 17069 / CCUG 31568 / BM 3577 / RP62A).